The sequence spans 179 residues: Ubiquinol-cytochrome c reductase iron-sulfur subunit (179 aa).

Residues 14 to 35 (FLYVATAAVGAAGVAAVAWPFI) traverse the membrane as a helical segment. Residues 80–173 (AKEIQSEEAA…YEFVDNTKIR (94 aa)) form the Rieske domain. [2Fe-2S] cluster contacts are provided by C118, H120, C137, and H140. Residues C123 and C139 are joined by a disulfide bond.

This sequence belongs to the Rieske iron-sulfur protein family. In terms of assembly, the main subunits of complex b-c1 are: cytochrome b, cytochrome c1 and the Rieske protein. [2Fe-2S] cluster is required as a cofactor.

It is found in the cell membrane. The catalysed reaction is a quinol + 2 Fe(III)-[cytochrome c](out) = a quinone + 2 Fe(II)-[cytochrome c](out) + 2 H(+)(out). Functionally, component of the ubiquinol-cytochrome c reductase complex (complex III or cytochrome b-c1 complex), which is a respiratory chain that generates an electrochemical potential coupled to ATP synthesis. This Blastochloris viridis (Rhodopseudomonas viridis) protein is Ubiquinol-cytochrome c reductase iron-sulfur subunit (petA).